A 382-amino-acid polypeptide reads, in one-letter code: UDP-4-amino-4-deoxy-L-arabinose--oxoglutarate aminotransferase (382 aa).

Lys-182 is subject to N6-(pyridoxal phosphate)lysine.

Belongs to the DegT/DnrJ/EryC1 family. ArnB subfamily. In terms of assembly, homodimer. It depends on pyridoxal 5'-phosphate as a cofactor.

It carries out the reaction UDP-4-amino-4-deoxy-beta-L-arabinose + 2-oxoglutarate = UDP-beta-L-threo-pentopyranos-4-ulose + L-glutamate. It functions in the pathway nucleotide-sugar biosynthesis; UDP-4-deoxy-4-formamido-beta-L-arabinose biosynthesis; UDP-4-deoxy-4-formamido-beta-L-arabinose from UDP-alpha-D-glucuronate: step 2/3. Its pathway is bacterial outer membrane biogenesis; lipopolysaccharide biosynthesis. Functionally, catalyzes the conversion of UDP-4-keto-arabinose (UDP-Ara4O) to UDP-4-amino-4-deoxy-L-arabinose (UDP-L-Ara4N). The modified arabinose is attached to lipid A and is required for resistance to polymyxin and cationic antimicrobial peptides. The polypeptide is UDP-4-amino-4-deoxy-L-arabinose--oxoglutarate aminotransferase (Pectobacterium carotovorum subsp. carotovorum (strain PC1)).